A 1094-amino-acid polypeptide reads, in one-letter code: Probable arabinosyltransferase A (1094 aa).

A run of 13 helical transmembrane segments spans residues I12 to L34, A205 to L224, G247 to A269, V322 to L344, S356 to F375, A408 to A430, G451 to V470, F519 to L536, G543 to F565, G575 to L597, T604 to Y626, I641 to W663, and I684 to A706.

This sequence belongs to the emb family.

Its subcellular location is the cell membrane. Arabinosyl transferase responsible for the polymerization of arabinose into the arabinan of arabinogalactan. This Mycobacterium tuberculosis (strain CDC 1551 / Oshkosh) protein is Probable arabinosyltransferase A (embA).